Here is a 236-residue protein sequence, read N- to C-terminus: MELRSALQSVCRTTAAAASASARSSLAGRHAFSTSARFQLQPPPNPYVSGKSRIETLRAALSNRKPAAGAAAGGSPGATSASSALPPRPPTANDSPWSIVDAINKDSNSSTSSSSSSSSSGGALYSSSKPSPMQTWNETDFETRHMAPQQELNIRLRPSTGRTFYVSGHQDFAGALKLLHRTVAANKVKKDVRLQRFHERPALKRKRNLRERWRARFKEGFKAAVNRTFELKNQGW.

Residues 65 to 136 form a disordered region; that stretch reads KPAAGAAAGG…SSKPSPMQTW (72 aa). Low complexity predominate over residues 107 to 131; that stretch reads SNSSTSSSSSSSSSGGALYSSSKPS.

This sequence belongs to the bacterial ribosomal protein bS21 family. Component of the mitochondrial small ribosomal subunit (mt-SSU). Mature N.crassa 74S mitochondrial ribosomes consist of a small (37S) and a large (54S) subunit. The 37S small subunit contains a 16S ribosomal RNA (16S mt-rRNA) and 32 different proteins. The 54S large subunit contains a 23S rRNA (23S mt-rRNA) and 42 different proteins.

It localises to the mitochondrion. In terms of biological role, component of the mitochondrial ribosome (mitoribosome), a dedicated translation machinery responsible for the synthesis of mitochondrial genome-encoded proteins, including at least some of the essential transmembrane subunits of the mitochondrial respiratory chain. The mitoribosomes are attached to the mitochondrial inner membrane and translation products are cotranslationally integrated into the membrane. The chain is Small ribosomal subunit protein bS21m (mrp21) from Neurospora crassa (strain ATCC 24698 / 74-OR23-1A / CBS 708.71 / DSM 1257 / FGSC 987).